Here is a 135-residue protein sequence, read N- to C-terminus: Interleukin-4 (135 aa).

Residues 1–24 form the signal peptide; it reads MGLTYQLIPVLVCLLVCTSHFVHG. Cystine bridges form between Cys27-Cys135, Cys48-Cys85, and Cys70-Cys105. N-linked (GlcNAc...) asparagine glycosylation is present at Asn62.

It belongs to the IL-4/IL-13 family.

It localises to the secreted. Participates in at least several B-cell activation processes as well as of other cell types. It is a costimulator of DNA-synthesis. It induces the expression of class II MHC molecules on resting B-cells. It enhances both secretion and cell surface expression of IgE and IgG1. It also regulates the expression of the low affinity Fc receptor for IgE (CD23) on both lymphocytes and monocytes. Positively regulates IL31RA expression in macrophages. Stimulates autophagy in dendritic cells by interfering with mTORC1 signaling and through the induction of RUFY4. This chain is Interleukin-4 (IL4), found in Bubalus carabanensis (Swamp type water buffalo).